The sequence spans 502 residues: Lysine--tRNA ligase (502 aa).

Mg(2+) is bound by residues Glu398 and Glu405.

It belongs to the class-II aminoacyl-tRNA synthetase family. Homodimer. Requires Mg(2+) as cofactor.

It is found in the cytoplasm. It catalyses the reaction tRNA(Lys) + L-lysine + ATP = L-lysyl-tRNA(Lys) + AMP + diphosphate. The protein is Lysine--tRNA ligase of Thermosipho melanesiensis (strain DSM 12029 / CIP 104789 / BI429).